Here is a 480-residue protein sequence, read N- to C-terminus: Cysteine--tRNA ligase (480 aa).

C27 contributes to the Zn(2+) binding site. The short motif at 29 to 39 (PTVYNYAHIGN) is the 'HIGH' region element. Zn(2+) is bound by residues C221, H246, and E250. Residues 278–282 (KMSKS) carry the 'KMSKS' region motif. Residue K281 participates in ATP binding.

The protein belongs to the class-I aminoacyl-tRNA synthetase family. As to quaternary structure, monomer. Requires Zn(2+) as cofactor.

It is found in the cytoplasm. The enzyme catalyses tRNA(Cys) + L-cysteine + ATP = L-cysteinyl-tRNA(Cys) + AMP + diphosphate. This chain is Cysteine--tRNA ligase, found in Borrelia garinii subsp. bavariensis (strain ATCC BAA-2496 / DSM 23469 / PBi) (Borreliella bavariensis).